A 231-amino-acid polypeptide reads, in one-letter code: Phosphatidylserine decarboxylase proenzyme (231 aa).

S188 serves as the catalytic Schiff-base intermediate with substrate; via pyruvic acid. S188 is modified (pyruvic acid (Ser); by autocatalysis).

Belongs to the phosphatidylserine decarboxylase family. PSD-A subfamily. In terms of assembly, heterodimer of a large membrane-associated beta subunit and a small pyruvoyl-containing alpha subunit. Pyruvate is required as a cofactor. Is synthesized initially as an inactive proenzyme. Formation of the active enzyme involves a self-maturation process in which the active site pyruvoyl group is generated from an internal serine residue via an autocatalytic post-translational modification. Two non-identical subunits are generated from the proenzyme in this reaction, and the pyruvate is formed at the N-terminus of the alpha chain, which is derived from the carboxyl end of the proenzyme. The post-translation cleavage follows an unusual pathway, termed non-hydrolytic serinolysis, in which the side chain hydroxyl group of the serine supplies its oxygen atom to form the C-terminus of the beta chain, while the remainder of the serine residue undergoes an oxidative deamination to produce ammonia and the pyruvoyl prosthetic group on the alpha chain.

Its subcellular location is the cell membrane. The enzyme catalyses a 1,2-diacyl-sn-glycero-3-phospho-L-serine + H(+) = a 1,2-diacyl-sn-glycero-3-phosphoethanolamine + CO2. It participates in phospholipid metabolism; phosphatidylethanolamine biosynthesis; phosphatidylethanolamine from CDP-diacylglycerol: step 2/2. Its function is as follows. Catalyzes the formation of phosphatidylethanolamine (PtdEtn) from phosphatidylserine (PtdSer). In Rickettsia prowazekii (strain Madrid E), this protein is Phosphatidylserine decarboxylase proenzyme.